The following is a 303-amino-acid chain: Ornithine carbamoyltransferase (303 aa).

Carbamoyl phosphate is bound by residues 52–55, glutamine 79, arginine 103, and 130–133; these read STRT and HPCQ. Residues asparagine 161, aspartate 222, and 226-227 each bind L-ornithine; that span reads SM. Residues 262–263 and arginine 290 each bind carbamoyl phosphate; that span reads CL.

It belongs to the aspartate/ornithine carbamoyltransferase superfamily. OTCase family.

It is found in the cytoplasm. The catalysed reaction is carbamoyl phosphate + L-ornithine = L-citrulline + phosphate + H(+). It participates in amino-acid biosynthesis; L-arginine biosynthesis; L-arginine from L-ornithine and carbamoyl phosphate: step 1/3. In terms of biological role, reversibly catalyzes the transfer of the carbamoyl group from carbamoyl phosphate (CP) to the N(epsilon) atom of ornithine (ORN) to produce L-citrulline. The polypeptide is Ornithine carbamoyltransferase (Geobacter sulfurreducens (strain ATCC 51573 / DSM 12127 / PCA)).